The primary structure comprises 367 residues: 2-aminoethylphosphonate--pyruvate transaminase (367 aa).

Pyridoxal 5'-phosphate contacts are provided by residues 65–67 (SGS), tyrosine 92, threonine 143, and aspartate 168. Lysine 194 carries the post-translational modification N6-(pyridoxal phosphate)lysine. Residue threonine 243 participates in pyridoxal 5'-phosphate binding.

It belongs to the class-V pyridoxal-phosphate-dependent aminotransferase family. PhnW subfamily. Homodimer. The cofactor is pyridoxal 5'-phosphate.

The catalysed reaction is (2-aminoethyl)phosphonate + pyruvate = phosphonoacetaldehyde + L-alanine. In terms of biological role, involved in phosphonate degradation. This chain is 2-aminoethylphosphonate--pyruvate transaminase (phnW), found in Salmonella typhimurium (strain LT2 / SGSC1412 / ATCC 700720).